The following is a 270-amino-acid chain: Elongation factor Ts (270 aa).

The involved in Mg(2+) ion dislocation from EF-Tu stretch occupies residues 77-80 (TDFV).

Belongs to the EF-Ts family.

It localises to the cytoplasm. Its function is as follows. Associates with the EF-Tu.GDP complex and induces the exchange of GDP to GTP. It remains bound to the aminoacyl-tRNA.EF-Tu.GTP complex up to the GTP hydrolysis stage on the ribosome. The protein is Elongation factor Ts of Nocardioides sp. (strain ATCC BAA-499 / JS614).